The chain runs to 513 residues: Histidine ammonia-lyase (513 aa).

The 5-imidazolinone (Ala-Gly) cross-link spans 144–146; sequence ASG. Ser-145 is subject to 2,3-didehydroalanine (Ser).

It belongs to the PAL/histidase family. Contains an active site 4-methylidene-imidazol-5-one (MIO), which is formed autocatalytically by cyclization and dehydration of residues Ala-Ser-Gly.

The protein localises to the cytoplasm. It catalyses the reaction L-histidine = trans-urocanate + NH4(+). The protein operates within amino-acid degradation; L-histidine degradation into L-glutamate; N-formimidoyl-L-glutamate from L-histidine: step 1/3. The protein is Histidine ammonia-lyase of Streptococcus pyogenes serotype M3 (strain ATCC BAA-595 / MGAS315).